We begin with the raw amino-acid sequence, 366 residues long: Probable glucuronokinase 2 (366 aa).

126-136 (PRQTGLSGSSA) is an ATP binding site. The Proton acceptor role is filled by Asp179.

Belongs to the GHMP kinase family. Requires Mg(2+) as cofactor. It depends on Mn(2+) as a cofactor. Co(2+) is required as a cofactor.

The enzyme catalyses D-glucuronate + ATP = 1-phospho-alpha-D-glucuronate + ADP + H(+). In terms of biological role, sugar-1-kinase with a strict substrate specificity for D-glucuronic acid and ATP. Involved in the biosynthesis of UDP-glucuronic acid (UDP-GlcA), providing nucleotide sugars for cell-wall polymers. May be also involved in a salvage pathway for glucuronic acid. This chain is Probable glucuronokinase 2 (GLCAK2), found in Arabidopsis thaliana (Mouse-ear cress).